Consider the following 237-residue polypeptide: Cobalt-precorrin-2 C(20)-methyltransferase (237 aa).

The protein belongs to the precorrin methyltransferase family. In terms of assembly, homodimer.

The enzyme catalyses Co-precorrin-2 + S-adenosyl-L-methionine = Co-precorrin-3 + S-adenosyl-L-homocysteine + H(+). Its pathway is cofactor biosynthesis; adenosylcobalamin biosynthesis; cob(II)yrinate a,c-diamide from sirohydrochlorin (anaerobic route): step 2/10. Methylates cobalt-precorrin-2 at the C-20 position to produce cobalt-precorrin-3A in the anaerobic cobalamin biosynthesis pathway. The protein is Cobalt-precorrin-2 C(20)-methyltransferase (cbiL) of Salmonella typhimurium (strain LT2 / SGSC1412 / ATCC 700720).